We begin with the raw amino-acid sequence, 152 residues long: Ribonuclease H (152 aa).

In terms of domain architecture, RNase H type-1 spans 1–142; sequence MGSKVVIYTD…ADKLAVQGRE (142 aa). Mg(2+) is bound by residues Asp10, Glu48, Asp70, and Asp134.

This sequence belongs to the RNase H family. Monomer. Mg(2+) is required as a cofactor.

Its subcellular location is the cytoplasm. It catalyses the reaction Endonucleolytic cleavage to 5'-phosphomonoester.. In terms of biological role, endonuclease that specifically degrades the RNA of RNA-DNA hybrids. This is Ribonuclease H from Rickettsia massiliae (strain Mtu5).